We begin with the raw amino-acid sequence, 95 residues long: L-amino-acid oxidase (95 aa).

The protein belongs to the flavin monoamine oxidase family. FIG1 subfamily. Homodimer; non-covalently linked. The cofactor is FAD. N-glycosylated. Expressed by the venom gland.

It localises to the secreted. The catalysed reaction is an L-alpha-amino acid + O2 + H2O = a 2-oxocarboxylate + H2O2 + NH4(+). The enzyme catalyses L-leucine + O2 + H2O = 4-methyl-2-oxopentanoate + H2O2 + NH4(+). It catalyses the reaction L-phenylalanine + O2 + H2O = 3-phenylpyruvate + H2O2 + NH4(+). It carries out the reaction L-tryptophan + O2 + H2O = indole-3-pyruvate + H2O2 + NH4(+). The catalysed reaction is L-methionine + O2 + H2O = 4-methylsulfanyl-2-oxobutanoate + H2O2 + NH4(+). The enzyme catalyses L-arginine + O2 + H2O = 5-guanidino-2-oxopentanoate + H2O2 + NH4(+). Catalyzes an oxidative deamination of predominantly hydrophobic and aromatic L-amino acids, thus producing hydrogen peroxide that may contribute to the diverse toxic effects of this enzyme. Is highly active on L-Met, L-Leu, L-Phe, L-Trp, and L-Arg, and no weakly or no active on L-His, L-Tyr, L-Ile, L-Gln, and L-Lys. Exhibits diverse biological activities, such as antibacterial activity against both Gram-positive (B.subtilis) and Gram-negative (E.coli) bacteria, and inhibition of ADP- or collagen-induced platelet aggregation. Effects of snake L-amino oxidases on platelets are controversial, since they either induce aggregation or inhibit agonist-induced aggregation. These different effects are probably due to different experimental conditions. This protein may also induce hemorrhage, hemolysis, edema, apoptosis, and have antiparasitic activities. In Naja oxiana (Central Asian cobra), this protein is L-amino-acid oxidase.